The following is a 126-amino-acid chain: Small ribosomal subunit protein uS11 (126 aa).

This sequence belongs to the universal ribosomal protein uS11 family. In terms of assembly, part of the 30S ribosomal subunit. Interacts with proteins S7 and S18. Binds to IF-3.

Located on the platform of the 30S subunit, it bridges several disparate RNA helices of the 16S rRNA. Forms part of the Shine-Dalgarno cleft in the 70S ribosome. This Desulfotalea psychrophila (strain LSv54 / DSM 12343) protein is Small ribosomal subunit protein uS11.